Consider the following 87-residue polypeptide: MANIKSAKKRAVQSEKRRQHNASQRSMMRTFIKKTYAAVATGDKAVAQAAFVEMQKVVDRMASKGLIHANKAANHKSKLAAQIKKLA.

Residues 1–11 (MANIKSAKKRA) show a composition bias toward basic residues. The interval 1-27 (MANIKSAKKRAVQSEKRRQHNASQRSM) is disordered.

This sequence belongs to the bacterial ribosomal protein bS20 family.

In terms of biological role, binds directly to 16S ribosomal RNA. This is Small ribosomal subunit protein bS20 from Histophilus somni (strain 129Pt) (Haemophilus somnus).